We begin with the raw amino-acid sequence, 431 residues long: Glutamyl-tRNA(Gln) amidotransferase subunit A (431 aa).

Residues Lys55 and Ser130 each act as charge relay system in the active site. Ser154 acts as the Acyl-ester intermediate in catalysis.

This sequence belongs to the amidase family. GatA subfamily. Heterotrimer of A, B and C subunits.

The enzyme catalyses L-glutamyl-tRNA(Gln) + L-glutamine + ATP + H2O = L-glutaminyl-tRNA(Gln) + L-glutamate + ADP + phosphate + H(+). In terms of biological role, allows the formation of correctly charged Gln-tRNA(Gln) through the transamidation of misacylated Glu-tRNA(Gln) in organisms which lack glutaminyl-tRNA synthetase. The reaction takes place in the presence of glutamine and ATP through an activated gamma-phospho-Glu-tRNA(Gln). The sequence is that of Glutamyl-tRNA(Gln) amidotransferase subunit A from Methanococcus maripaludis (strain C6 / ATCC BAA-1332).